The sequence spans 261 residues: Type III pantothenate kinase (261 aa).

6 to 13 (DVGNTNAK) contributes to the ATP binding site. 108–111 (GADR) lines the substrate pocket. Asp110 acts as the Proton acceptor in catalysis. Thr134 is an ATP binding site. Thr188 contacts substrate.

The protein belongs to the type III pantothenate kinase family. As to quaternary structure, homodimer. NH4(+) serves as cofactor. K(+) is required as a cofactor.

The protein resides in the cytoplasm. It carries out the reaction (R)-pantothenate + ATP = (R)-4'-phosphopantothenate + ADP + H(+). It participates in cofactor biosynthesis; coenzyme A biosynthesis; CoA from (R)-pantothenate: step 1/5. In terms of biological role, catalyzes the phosphorylation of pantothenate (Pan), the first step in CoA biosynthesis. In Sphingopyxis alaskensis (strain DSM 13593 / LMG 18877 / RB2256) (Sphingomonas alaskensis), this protein is Type III pantothenate kinase.